We begin with the raw amino-acid sequence, 232 residues long: Large ribosomal subunit protein uL1 (232 aa).

The protein belongs to the universal ribosomal protein uL1 family. Part of the 50S ribosomal subunit.

Functionally, binds directly to 23S rRNA. The L1 stalk is quite mobile in the ribosome, and is involved in E site tRNA release. Protein L1 is also a translational repressor protein, it controls the translation of the L11 operon by binding to its mRNA. The polypeptide is Large ribosomal subunit protein uL1 (Paraburkholderia xenovorans (strain LB400)).